Reading from the N-terminus, the 509-residue chain is Probable DNA ligase (509 aa).

D218 contacts ATP. The active-site N6-AMP-lysine intermediate is K220. R225, R240, E269, F302, R374, and K380 together coordinate ATP.

This sequence belongs to the ATP-dependent DNA ligase family. Requires Mg(2+) as cofactor.

The catalysed reaction is ATP + (deoxyribonucleotide)n-3'-hydroxyl + 5'-phospho-(deoxyribonucleotide)m = (deoxyribonucleotide)n+m + AMP + diphosphate.. DNA ligase that seals nicks in double-stranded DNA during DNA replication, DNA recombination and DNA repair. This chain is Probable DNA ligase, found in Nocardioides sp. (strain ATCC BAA-499 / JS614).